Consider the following 355-residue polypeptide: Protein-glutamate methylesterase/protein-glutamine glutaminase (355 aa).

A Response regulatory domain is found at 4-121; sequence KVLIIDDSAL…ANGMHEYSEM (118 aa). A 4-aspartylphosphate modification is found at Asp-55. The 193-residue stretch at 156–348 folds into the CheB-type methylesterase domain; that stretch reads LISSEKLIII…GRVLQYLAAN (193 aa). Residues Ser-168, His-194, and Asp-290 contribute to the active site.

This sequence belongs to the CheB family. Phosphorylated by CheA. Phosphorylation of the N-terminal regulatory domain activates the methylesterase activity.

The protein localises to the cytoplasm. The catalysed reaction is [protein]-L-glutamate 5-O-methyl ester + H2O = L-glutamyl-[protein] + methanol + H(+). It carries out the reaction L-glutaminyl-[protein] + H2O = L-glutamyl-[protein] + NH4(+). In terms of biological role, involved in chemotaxis. Part of a chemotaxis signal transduction system that modulates chemotaxis in response to various stimuli. Catalyzes the demethylation of specific methylglutamate residues introduced into the chemoreceptors (methyl-accepting chemotaxis proteins or MCP) by CheR. Also mediates the irreversible deamidation of specific glutamine residues to glutamic acid. The chain is Protein-glutamate methylesterase/protein-glutamine glutaminase from Methylobacillus flagellatus (strain ATCC 51484 / DSM 6875 / VKM B-1610 / KT).